A 305-amino-acid chain; its full sequence is tRNA dimethylallyltransferase (305 aa).

8–15 (GPTAVGKT) serves as a coordination point for ATP. 10–15 (TAVGKT) is a binding site for substrate. An interaction with substrate tRNA region spans residues 33–36 (DSRQ).

It belongs to the IPP transferase family. As to quaternary structure, monomer. Mg(2+) serves as cofactor.

The catalysed reaction is adenosine(37) in tRNA + dimethylallyl diphosphate = N(6)-dimethylallyladenosine(37) in tRNA + diphosphate. Catalyzes the transfer of a dimethylallyl group onto the adenine at position 37 in tRNAs that read codons beginning with uridine, leading to the formation of N6-(dimethylallyl)adenosine (i(6)A). This chain is tRNA dimethylallyltransferase, found in Thermotoga maritima (strain ATCC 43589 / DSM 3109 / JCM 10099 / NBRC 100826 / MSB8).